Consider the following 360-residue polypeptide: Decorin (360 aa).

Positions 1–16 (MKATIIFLLLAQVSWA) are cleaved as a signal peptide. The propeptide occupies 17–30 (GPFQQRGLFDFMLE). S34 carries an O-linked (Xyl...) (glycosaminoglycan) serine glycan. Intrachain disulfides connect C55-C61 and C59-C68. LRR repeat units follow at residues 74 to 94 (DKVPKDLPPDTTLLDLQNNKI), 95 to 118 (TEIKDGDFKNLKNLHTLILVNNKI), 119 to 142 (SKISPGAFTPLLKLERLYLSKNHL), 143 to 163 (KELPEKMPKTLQELRAHENEI), 164 to 187 (TKVRKAVFNGLNQMIVVELGTNPL), 188 to 213 (KSSGIENGAFQGMKKLSYIRIADTNI), 214 to 234 (TTIPQGLPPSLTELHLEGNKI), 235 to 258 (TKVDASSLKGLNNLAKLGLSFNSI), 259 to 282 (SAVDNGTLANTPHLRELHLDNNKL), 283 to 305 (IRVPGGLAEHKYIQVVYLHNNNI), 306 to 335 (SAVGSNDFCPPGYNTKKASYSGVSLFSNPV), and 336 to 360 (QYWEIQPSTFRCVYVRSAIQLGNYK). Residue N212 is glycosylated (N-linked (GlcNAc...) asparagine). 2 N-linked (GlcNAc...) asparagine glycosylation sites follow: N263 and N304. A disulfide bridge links C314 with C347.

The protein belongs to the small leucine-rich proteoglycan (SLRP) family. SLRP class I subfamily. In terms of assembly, binds to type I and type II collagen, fibronectin and TGF-beta. Forms a ternary complex with MFAP2 and ELN. Interacts with DPT. The attached glycosaminoglycan chain can be either chondroitin sulfate or dermatan sulfate depending upon the tissue of origin.

The protein resides in the secreted. It localises to the extracellular space. The protein localises to the extracellular matrix. Its function is as follows. May affect the rate of fibrils formation. This Canis lupus familiaris (Dog) protein is Decorin (DCN).